The primary structure comprises 239 residues: Transcriptional regulatory protein BtsR (239 aa).

One can recognise a Response regulatory domain in the interval 3 to 116; that stretch reads KVLIVDDEPL…RLEKTLHRLR (114 aa). At aspartate 54 the chain carries 4-aspartylphosphate. The HTH LytTR-type domain maps to 137-239; the sequence is IPCTGHSRIY…LKSLKEAIGL (103 aa).

Phosphorylated by BtsS.

Member of the two-component regulatory system BtsS/BtsR. BtsR regulates expression of btsT by binding to its promoter region. The protein is Transcriptional regulatory protein BtsR of Salmonella typhi.